The sequence spans 207 residues: uncharacterized protein (207 aa).

Catalysis depends on charge relay system residues serine 119 and histidine 160.

It belongs to the peptidase S51 family.

This is an uncharacterized protein from Pasteurella multocida (strain Pm70).